Reading from the N-terminus, the 241-residue chain is Pre-rRNA-processing protein pno1 (241 aa).

The segment at alanine 48 to proline 71 is disordered. Threonine 52 is subject to Phosphothreonine. One can recognise a KH domain in the interval glycine 162–valine 214.

This sequence belongs to the PNO1 family. As to quaternary structure, component of the small ribosomal subunit, ribosomal RNA processing complex (SSU RRP complex).

Its subcellular location is the cytoplasm. The protein resides in the nucleus. The protein localises to the nucleolus. Functionally, required for small ribosomal subunit (SSU) synthesis. Has a role in the processing of early nucleolar and late cytoplasmic pre-RNA species. The sequence is that of Pre-rRNA-processing protein pno1 (rbp28) from Schizosaccharomyces pombe (strain 972 / ATCC 24843) (Fission yeast).